A 127-amino-acid polypeptide reads, in one-letter code: MNFSGKYQVQSQENFEAFMKAVGLPDELIQKGKDIKGTSEIVQNGKHFKLTITTGSKVVQNEFTLGEECEMETLTGEKVKTVVQLEGDNKLVTTFKGIKSVTELNGDIITSTMTLGDIVFKRISKRI.

M1 carries the N-acetylmethionine modification. S11 is modified (phosphoserine). 2 positions are modified to N6-succinyllysine: K31 and K36. S39 carries the post-translational modification Phosphoserine. K46 carries the N6-succinyllysine modification. T51 carries the phosphothreonine modification. S56 bears the Phosphoserine mark. 3 positions are modified to N6-succinyllysine: K57, K78, and K90. Residue S100 is modified to Phosphoserine. Position 121 is an N6-succinyllysine (K121).

The protein belongs to the calycin superfamily. Fatty-acid binding protein (FABP) family. As to quaternary structure, monomer.

The protein resides in the cytoplasm. Functionally, plays a role in lipoprotein-mediated cholesterol uptake in hepatocytes. Binds cholesterol. Binds free fatty acids and their coenzyme A derivatives, bilirubin, and some other small molecules in the cytoplasm. May be involved in intracellular lipid transport. The sequence is that of Fatty acid-binding protein, liver (FABP1) from Sus scrofa (Pig).